The primary structure comprises 594 residues: UvrABC system protein C (594 aa).

A GIY-YIG domain is found at 14–91 (DSPGCYLHKD…IQENMPKYNI (78 aa)). In terms of domain architecture, UVR spans 196–231 (DKIIDDLRSKMLEASNKQEFERAAEYRDLISGIATM).

This sequence belongs to the UvrC family. As to quaternary structure, interacts with UvrB in an incision complex.

The protein resides in the cytoplasm. Functionally, the UvrABC repair system catalyzes the recognition and processing of DNA lesions. UvrC both incises the 5' and 3' sides of the lesion. The N-terminal half is responsible for the 3' incision and the C-terminal half is responsible for the 5' incision. This chain is UvrABC system protein C, found in Streptococcus equi subsp. zooepidemicus (strain MGCS10565).